Here is a 160-residue protein sequence, read N- to C-terminus: MRLLLWVLISMLSIALSSCAAASADSNERLVRAVYSTVRSRDLATDDGPKHTKRFLRGESSKIVNLKQEEGVFEERKGVSQKLTKALQAIKARYLKWEQKVLVPGFKKMAEKGVTYSELRDTFRVRMMNSGRWGTPSGFKRYARLYSEWLHRTGRSHLAK.

A signal peptide spans 1-21 (MRLLLWVLISMLSIALSSCAA). Positions 54-76 (RFLRGESSKIVNLKQEEGVFEER) match the RxLR-dEER motif.

It belongs to the RxLR effector family.

It is found in the secreted. The protein resides in the host cell membrane. It localises to the host nucleus. The protein localises to the host nucleolus. Functionally, effector that is involved in host plant infection. Contributes to virulence during the early infection stage, by inhibiting plant defense responses induced by both PAMP-triggered immunity (PTI) and effector-triggered immunity (ETI). The chain is RxLR effector protein PexRD44 from Phytophthora infestans (strain T30-4) (Potato late blight agent).